We begin with the raw amino-acid sequence, 670 residues long: DNA ligase (670 aa).

NAD(+) is bound by residues 34–38 (DAEYD), 83–84 (SL), and glutamate 112. Lysine 114 serves as the catalytic N6-AMP-lysine intermediate. Positions 135, 169, 285, and 309 each coordinate NAD(+). Zn(2+) contacts are provided by cysteine 403, cysteine 406, cysteine 421, and cysteine 426. The BRCT domain maps to 589-670 (PASSVLAGKT…FLQEISREEQ (82 aa)).

Belongs to the NAD-dependent DNA ligase family. LigA subfamily. Mg(2+) is required as a cofactor. The cofactor is Mn(2+).

The enzyme catalyses NAD(+) + (deoxyribonucleotide)n-3'-hydroxyl + 5'-phospho-(deoxyribonucleotide)m = (deoxyribonucleotide)n+m + AMP + beta-nicotinamide D-nucleotide.. DNA ligase that catalyzes the formation of phosphodiester linkages between 5'-phosphoryl and 3'-hydroxyl groups in double-stranded DNA using NAD as a coenzyme and as the energy source for the reaction. It is essential for DNA replication and repair of damaged DNA. This Geobacillus thermodenitrificans (strain NG80-2) protein is DNA ligase.